Reading from the N-terminus, the 390-residue chain is Transforming growth factor beta-1 proprotein (390 aa).

A signal peptide spans 1 to 29 (MPPSGLRLLPLLLPLLWLLVLTPGRPAAG). A straightjacket domain region spans residues 30 to 74 (LSTCKTIDMELVKRKRIEAIRGQILSKLRLASPPSQGEVPPGPLP). Residues 75–271 (EAVLALYNST…ATPLERAQHL (197 aa)) form an arm domain region. 3 N-linked (GlcNAc...) asparagine glycosylation sites follow: asparagine 82, asparagine 136, and asparagine 176. Residues 226-252 (DSRDNTLQVDINGFTTGRRGDLATIHG) form a bowtie tail region. The Cell attachment site signature appears at 244–246 (RGD). 4 disulfide bridges follow: cysteine 285–cysteine 294, cysteine 293–cysteine 356, cysteine 322–cysteine 387, and cysteine 326–cysteine 389.

The protein belongs to the TGF-beta family. As to quaternary structure, homodimer; disulfide-linked. Interacts with the serine proteases, HTRA1 and HTRA3: the interaction with either inhibits TGFB1-mediated signaling and the HTRA protease activity is required for this inhibition. May interact with THSD4; this interaction may lead to sequestration by FBN1 microfibril assembly and attenuation of TGFB signaling. Interacts with CD109, DPT and ASPN. Interacts with EFEMP2. Interacts with TSKU; the interaction contributes to regulation of the hair cycle. Homodimer; disulfide-linked. Interacts with transforming growth factor beta-1 (TGF-beta-1) chain; interaction is non-covalent and maintains TGF-beta-1 in a latent state; each latency-associated peptide (LAP) monomer interacts with TGF-beta-1 in the other monomer. Interacts with LTBP1; leading to regulation of TGF-beta-1 activation. Interacts with LRRC32/GARP; leading to regulation of TGF-beta-1 activation on the surface of activated regulatory T-cells (Tregs). Interacts with LRRC33/NRROS; leading to regulation of TGF-beta-1 in macrophages and microglia. Interacts (via cell attachment site) with integrins ITGAV and ITGB6 (ITGAV:ITGB6), leading to release of the active TGF-beta-1. Interacts with NREP; the interaction results in a decrease in TGFB1 autoinduction. Interacts with HSP90AB1; inhibits latent TGFB1 activation. Interact with PSG9; leading to TGFB1 activation. Interacts with TGFBR3. In terms of assembly, homodimer; disulfide-linked. Interacts with TGF-beta receptors (TGFBR1 and TGFBR2), leading to signal transduction. Post-translationally, transforming growth factor beta-1 proprotein: The precursor proprotein is cleaved in the Golgi apparatus by FURIN to form Transforming growth factor beta-1 (TGF-beta-1) and Latency-associated peptide (LAP) chains, which remain non-covalently linked, rendering TGF-beta-1 inactive. In terms of processing, N-glycosylated. Deglycosylation leads to activation of Transforming growth factor beta-1 (TGF-beta-1); mechanisms triggering deglycosylation-driven activation of TGF-beta-1 are however unclear. Highly expressed in bone. Abundantly expressed in articular cartilage and chondrocytes and is increased in osteoarthritis (OA). Colocalizes with ASPN in chondrocytes within OA lesions of articular cartilage.

It is found in the secreted. It localises to the extracellular space. Its subcellular location is the extracellular matrix. Transforming growth factor beta-1 proprotein: Precursor of the Latency-associated peptide (LAP) and Transforming growth factor beta-1 (TGF-beta-1) chains, which constitute the regulatory and active subunit of TGF-beta-1, respectively. In terms of biological role, required to maintain the Transforming growth factor beta-1 (TGF-beta-1) chain in a latent state during storage in extracellular matrix. Associates non-covalently with TGF-beta-1 and regulates its activation via interaction with 'milieu molecules', such as LTBP1, LRRC32/GARP and LRRC33/NRROS, that control activation of TGF-beta-1. Interaction with LRRC33/NRROS regulates activation of TGF-beta-1 in macrophages and microglia. Interaction with LRRC32/GARP controls activation of TGF-beta-1 on the surface of activated regulatory T-cells (Tregs). Interaction with integrins (ITGAV:ITGB6 or ITGAV:ITGB8) results in distortion of the Latency-associated peptide chain and subsequent release of the active TGF-beta-1. Its function is as follows. Multifunctional protein that regulates the growth and differentiation of various cell types and is involved in various processes, such as normal development, immune function, microglia function and responses to neurodegeneration. Activation into mature form follows different steps: following cleavage of the proprotein in the Golgi apparatus, Latency-associated peptide (LAP) and Transforming growth factor beta-1 (TGF-beta-1) chains remain non-covalently linked rendering TGF-beta-1 inactive during storage in extracellular matrix. At the same time, LAP chain interacts with 'milieu molecules', such as LTBP1, LRRC32/GARP and LRRC33/NRROS that control activation of TGF-beta-1 and maintain it in a latent state during storage in extracellular milieus. TGF-beta-1 is released from LAP by integrins (ITGAV:ITGB6 or ITGAV:ITGB8): integrin-binding to LAP stabilizes an alternative conformation of the LAP bowtie tail and results in distortion of the LAP chain and subsequent release of the active TGF-beta-1. Once activated following release of LAP, TGF-beta-1 acts by binding to TGF-beta receptors (TGFBR1 and TGFBR2), which transduce signal. While expressed by many cells types, TGF-beta-1 only has a very localized range of action within cell environment thanks to fine regulation of its activation by Latency-associated peptide chain (LAP) and 'milieu molecules'. Plays an important role in bone remodeling: acts as a potent stimulator of osteoblastic bone formation, causing chemotaxis, proliferation and differentiation in committed osteoblasts. Can promote either T-helper 17 cells (Th17) or regulatory T-cells (Treg) lineage differentiation in a concentration-dependent manner. At high concentrations, leads to FOXP3-mediated suppression of RORC and down-regulation of IL-17 expression, favoring Treg cell development. At low concentrations in concert with IL-6 and IL-21, leads to expression of the IL-17 and IL-23 receptors, favoring differentiation to Th17 cells. Stimulates sustained production of collagen through the activation of CREB3L1 by regulated intramembrane proteolysis (RIP). Mediates SMAD2/3 activation by inducing its phosphorylation and subsequent translocation to the nucleus. Positively regulates odontoblastic differentiation in dental papilla cells, via promotion of IPO7-mediated translocation of phosphorylated SMAD2 to the nucleus and subsequent transcription of target genes. Can induce epithelial-to-mesenchymal transition (EMT) and cell migration in various cell types. The sequence is that of Transforming growth factor beta-1 proprotein from Homo sapiens (Human).